The primary structure comprises 756 residues: Ribosomal RNA large subunit methyltransferase K/L (756 aa).

Positions 46 to 157 (TAYRLCLWSR…RGEAILSLDL (112 aa)) constitute a THUMP domain. Positions 395–409 (ERRTPEQRQAEREQA) are enriched in basic and acidic residues. Residues 395-441 (ERRTPEQRQAEREQAAYDQTPNEPQERKFNKNGNPIKPTPAPAPVIE) are disordered.

This sequence belongs to the methyltransferase superfamily. RlmKL family.

The protein localises to the cytoplasm. The catalysed reaction is guanosine(2445) in 23S rRNA + S-adenosyl-L-methionine = N(2)-methylguanosine(2445) in 23S rRNA + S-adenosyl-L-homocysteine + H(+). It catalyses the reaction guanosine(2069) in 23S rRNA + S-adenosyl-L-methionine = N(2)-methylguanosine(2069) in 23S rRNA + S-adenosyl-L-homocysteine + H(+). Functionally, specifically methylates the guanine in position 2445 (m2G2445) and the guanine in position 2069 (m7G2069) of 23S rRNA. The sequence is that of Ribosomal RNA large subunit methyltransferase K/L from Pseudomonas fluorescens (strain Pf0-1).